A 118-amino-acid chain; its full sequence is Membrane-anchored ubiquitin-fold protein 3 (118 aa).

One can recognise a Ubiquitin-like domain in the interval 7-73; sequence IDIKFRLYDG…LENNKTVGQC (67 aa). Cys-113 carries S-palmitoyl cysteine lipidation. Residue Cys-115 is modified to Cysteine methyl ester. Residue Cys-115 is the site of S-geranylgeranyl cysteine attachment. Positions 116-118 are cleaved as a propeptide — removed in mature form; it reads TIL.

In terms of tissue distribution, ubiquitous, but three fold higher expression in senescing leaves.

It is found in the cell membrane. Its function is as follows. May serve as docking site to facilitate the association of other proteins to the plasma membrane. The sequence is that of Membrane-anchored ubiquitin-fold protein 3 (MUB3) from Arabidopsis thaliana (Mouse-ear cress).